A 336-amino-acid chain; its full sequence is Glyceraldehyde-3-phosphate dehydrogenase, plasmid (336 aa).

Residues 12–13 (RI), D37, R81, and S123 contribute to the NAD(+) site. Residues 154–156 (SCT) and T185 contribute to the D-glyceraldehyde 3-phosphate site. C155 functions as the Nucleophile in the catalytic mechanism. Residue N186 coordinates NAD(+). D-glyceraldehyde 3-phosphate contacts are provided by residues R200, 213–214 (TG), and R236. N317 contributes to the NAD(+) binding site.

Belongs to the glyceraldehyde-3-phosphate dehydrogenase family. In terms of assembly, homotetramer.

The catalysed reaction is D-glyceraldehyde 3-phosphate + phosphate + NAD(+) = (2R)-3-phospho-glyceroyl phosphate + NADH + H(+). The protein operates within carbohydrate biosynthesis; Calvin cycle. Its function is as follows. Could be involved in carbon fixation as a component of the Calvin cycle. Catalyzes the oxidative phosphorylation of glyceraldehyde 3-phosphate (G3P) to 1,3-bisphosphoglycerate (BPG) using the cofactor NAD. The first reaction step involves the formation of a hemiacetal intermediate between G3P and a cysteine residue, and this hemiacetal intermediate is then oxidized to a thioester, with concomitant reduction of NAD to NADH. The reduced NADH is then exchanged with the second NAD, and the thioester is attacked by a nucleophilic inorganic phosphate to produce BPG. The sequence is that of Glyceraldehyde-3-phosphate dehydrogenase, plasmid (cbbGP) from Cupriavidus necator (strain ATCC 17699 / DSM 428 / KCTC 22496 / NCIMB 10442 / H16 / Stanier 337) (Ralstonia eutropha).